A 364-amino-acid polypeptide reads, in one-letter code: Putative agmatine deiminase (364 aa).

The active-site Amidino-cysteine intermediate is the cysteine 355.

The protein belongs to the agmatine deiminase family.

It carries out the reaction agmatine + H2O = N-carbamoylputrescine + NH4(+). In Mycoplasma mycoides subsp. mycoides SC (strain CCUG 32753 / NCTC 10114 / PG1), this protein is Putative agmatine deiminase.